The chain runs to 741 residues: Ethylene receptor 2 (741 aa).

3 consecutive transmembrane segments (helical) span residues 23–43 (ISDF…IYFV), 53–73 (WVLV…LINL), and 92–112 (IMTA…IPDL). Residues cysteine 65 and histidine 69 each contribute to the Cu cation site. The 150-residue stretch at 158-307 (DRHTILKTTL…VVADQVAVAL (150 aa)) folds into the GAF domain. The region spanning 350–589 (VMNHEMRTPM…TFVVKLGIPE (240 aa)) is the Histidine kinase domain. Histidine 353 is subject to Phosphohistidine; by autocatalysis. In terms of domain architecture, Response regulatory spans 615 to 732 (KVLLLDDNGV…KMRNVLSNLL (118 aa)). Position 663 is a 4-aspartylphosphate (aspartate 663).

This sequence belongs to the ethylene receptor family. As to quaternary structure, homodimer; disulfide-linked. Cu cation serves as cofactor. In terms of processing, activation probably requires a transfer of a phosphate group between a His in the transmitter domain and an Asp of the receiver domain.

It localises to the endoplasmic reticulum membrane. The catalysed reaction is ATP + protein L-histidine = ADP + protein N-phospho-L-histidine.. In terms of biological role, may act early in the ethylene signal transduction pathway, possibly as an ethylene receptor, or as a regulator of the pathway. The sequence is that of Ethylene receptor 2 (ETR2) from Pelargonium hortorum (Common geranium).